A 90-amino-acid chain; its full sequence is UPF0298 protein SSU05_1549 (90 aa).

This sequence belongs to the UPF0298 family.

The protein resides in the cytoplasm. The sequence is that of UPF0298 protein SSU05_1549 from Streptococcus suis (strain 05ZYH33).